Here is a 500-residue protein sequence, read N- to C-terminus: MPVLIPPVEHSQDTRVGHPAWREATRALAEEAHQLTDRCGQEAVTMWQPNESVRDPHVAHHLCRAAYILPWRFRVEMLKGGSTMEKPPPGEGVTLWKSKMKPPAWHARLPLPMHRDARALQTAEVVQAHARGARLTAARLGRAQHQINGQLRLLQRQREATDRRLSEVRKALLINQQSVKLRGYRPKSETISDKADSMLTWEKEELKSMKRKMEADMEKSEALLKTLASCRDALVFCCKERLQAVELMNQPLDKVLEQAGRHSWVNISRVPTPRTQGLKTPPPDPVGTYTPECAKALYEAKRLLMESKDTLLDMAKNEEDIREQQQQISDRVCASLAQKMRETLELKDRLNMTLGLMRGTIHRCTKFNQEMYITRGLIKGPLSKSHLETREKLDRPLVRMYQRHVGTQLPEAARLAQGTDKLQRHISHVEKNLDELLSMRKKLTWSFNCKKIGHNVDYSVVRLRLRQRHPQVCYEQAQRLVNDWDPRTPPRVKSNTAITK.

The stretch at 198 to 229 (MLTWEKEELKSMKRKMEADMEKSEALLKTLAS) forms a coiled coil. Position 372 is a phosphotyrosine (Tyr-372). Residues 420–444 (DKLQRHISHVEKNLDELLSMRKKLT) adopt a coiled-coil conformation.

In terms of assembly, microtubule inner protein component of sperm flagellar doublet microtubules.

Its subcellular location is the cytoplasm. It is found in the cytoskeleton. The protein localises to the flagellum axoneme. Microtubule inner protein (MIP) part of the dynein-decorated doublet microtubules (DMTs) in sperm flagellar axoneme, which is required for motile flagellum beating. Forms an extensive interaction network cross-linking the lumen of axonemal doublet microtubules. This Bos taurus (Bovine) protein is Tektin-like protein 1.